Reading from the N-terminus, the 255-residue chain is MDIGIDLLAILFCVGFVASFIDAIAGGGGLITIPALLMTGMPPAMALGTNKLQAMGGALSASLYFLRKRAVNLRDIWFILIWVFLGSALGTLLIQSIDVAIFKKMLPFLILAIGLYFLFTPKLGDEDRKQRLSYLLFGLLVSPFLGFYDGFFGPGTGSIMSLACVTLLGFNLPKAAAHAKVMNFTSNLASFALFLLGGQILWKVGFVMMAGSILGANLGAKMVMTKGKTLIRPMVVIMSFMMTAKMVYDQGWFHF.

The next 8 membrane-spanning stretches (helical) occupy residues 7–27 (LLAILFCVGFVASFIDAIAGG), 28–48 (GGLITIPALLMTGMPPAMALG), 76–96 (IWFILIWVFLGSALGTLLIQS), 99–119 (VAIFKKMLPFLILAIGLYFLF), 132–152 (LSYLLFGLLVSPFLGFYDGFF), 153–173 (GPGTGSIMSLACVTLLGFNLP), 191–211 (FALFLLGGQILWKVGFVMMAG), and 235–255 (VVIMSFMMTAKMVYDQGWFHF).

The protein belongs to the 4-toluene sulfonate uptake permease (TSUP) (TC 2.A.102) family.

Its subcellular location is the cell membrane. This is Probable membrane transporter protein HI_0198 from Haemophilus influenzae (strain ATCC 51907 / DSM 11121 / KW20 / Rd).